Reading from the N-terminus, the 107-residue chain is Nucleoid-associated protein GbCGDNIH1_0260 (107 aa).

This sequence belongs to the YbaB/EbfC family. Homodimer.

It localises to the cytoplasm. The protein localises to the nucleoid. Functionally, binds to DNA and alters its conformation. May be involved in regulation of gene expression, nucleoid organization and DNA protection. This chain is Nucleoid-associated protein GbCGDNIH1_0260, found in Granulibacter bethesdensis (strain ATCC BAA-1260 / CGDNIH1).